The chain runs to 496 residues: Glutamate--tRNA ligase (496 aa).

Residues 11-21 carry the 'HIGH' region motif; it reads PSPTGLLHIGN. The 'KMSKS' region signature appears at 255–259; the sequence is KLSKR. Position 258 (Lys-258) interacts with ATP.

The protein belongs to the class-I aminoacyl-tRNA synthetase family. Glutamate--tRNA ligase type 1 subfamily. In terms of assembly, monomer.

It localises to the cytoplasm. The enzyme catalyses tRNA(Glu) + L-glutamate + ATP = L-glutamyl-tRNA(Glu) + AMP + diphosphate. Its function is as follows. Catalyzes the attachment of glutamate to tRNA(Glu) in a two-step reaction: glutamate is first activated by ATP to form Glu-AMP and then transferred to the acceptor end of tRNA(Glu). The polypeptide is Glutamate--tRNA ligase (Streptococcus pyogenes serotype M49 (strain NZ131)).